The chain runs to 218 residues: DNA replication complex GINS protein psf3 (218 aa).

Gly residues predominate over residues 147–163 (GGGSSYHGRDGGGAGGK). The disordered stretch occupies residues 147 to 182 (GGGSSYHGRDGGGAGGKGKGKATKDDNASNLGVGGA).

The protein belongs to the GINS3/PSF3 family. In terms of assembly, component of the GINS complex which is a heterotetramer of div-26/sld5, drc-1/psf1, drc-2/psf2 and drc-3/psf3.

It localises to the nucleus. Its function is as follows. The GINS complex plays an essential role in the initiation of DNA replication. This Neurospora crassa (strain ATCC 24698 / 74-OR23-1A / CBS 708.71 / DSM 1257 / FGSC 987) protein is DNA replication complex GINS protein psf3 (drc-3).